The following is a 1537-amino-acid chain: MDISAPQSRADSRKDRWCPGERCLAPSLDNKKLCEASIKSITVDGNGKPFAVVLYPDFQEKTIPLQRLQEVKSTKDYSRSLIFDDKDLEKPYFPDRKIPSLASAFQLSEDGDSIPYTINRYLRDYQREGAQFLYRHYIEGRGCILGDDMGLGKTIQVISFLAAVLHKKGTREDIENNMPEFLLKSMKKKPPSTAKKMFLIVAPLSVLYNWKDELDTWGYFRVTVLHGSKKDNELLRLKQRKCEIALTTYETLRLCLEELNSLEWSAIIVDEAHRIKNPKARVTEVMKAVKCKVRIGLTGTVLQNNMKELWCVMDWAVPGLLGSRIHFKKQFSDPVEHGQRHTATKRELATGRKAMHRLAKKMSGWFLRRTKTLIKGQLPKKEDRMVYCSLTDFQKAVYQTVLETEDVALILTSSQPCTCGSGQKRRKCCYKTNSRGDTVRTLCLSYLTVLQKVANHVALLQAASTSKHQETVIKRICDRVFSRFPDFVQKSKDAAFETLSDPKYSGKMKVLQQLLNHFRKQRDKVLLFSFSTKLLDVLQQYCMASGLDYRRLDGSTKSEERLKIVKEFNSSQDVNICLVSTMAGGLGLNFVGANVVILFDPTWNPANDLQAVDRAYRIGQCRDVKVLRLISLGTVEEIMYLRQVYKQQLHCVVVGSENAKRYFEAVQGSKEHRGELFGVHNLFKLRSQGSCLTRDILEREGQVEAGIMTATTWLKGEPSAQELETPRDPDCQEPTDVCELYSDISDEESVGHSLGKTDKHKFSDTSRTPGFPAQLTLLQCGFSKLFEAKYKSDQDGDGNPVPSDGSSDEQPMCLSAEARQAARQKTWDSVCTSEHQKSDNIQTPDEKCVSDKSEKTLEQNVSSESDDETKDHRTAGHHCMGQGDTESEDSDVIFPTQYPTQRIPKNHIRFKLLLGESEDSEAENPVKVNHGDDRQNSGRGNGPVPNLLCLENMTSKSVRKRKGTDDISDESDDIDMFPKSRIRKQRATTSLKFKRKKENKRKLDNSPVTAKEANQVCAADGDRSSQVIEDFSSSDDNLSLSHLSFTKLSHRAETVKDKISLSPKLPGPDKKNNTFISRKPPSFLNEGVISQEQICNSMDKILDGVQEVAYIHSNQNVIGSSRAENHMSRWATRDVFELKQFSQLPANVAVCSSKTYKTQVKANIVSPTEKDQPPSDGGISSPLYVSHPVVQKKKDVYRTNHTTFIIGETPRGIRRKQFEEMASYYKLPVKEFAEQVTRATSEERQKMLRDFYSLQHPEVKEFFVNSASELIKSVHKKEERVRNKSKEKESLLKENPSNDSTLSCYDSTNKMSQVYNRKICEGKSVRSQNHVFHREDTFSSDAEINKSPVSFTEELHSERKDHTPKDTTTVFCPNSNSEALEAELGNSPGRQWDLTGACGSRNRPLFKLRNKRVENPGSENTPEDGLLGDTSILNDLFKSHGEGPTQLPKNVLSGPVAKAKQKPKDFWDILNEQNDDSLSKLTDLAVIETLCTKAPSTSASKRKDELEASLWKANEKFLWKTLSSDVDDESISNTERE.

One can recognise a Helicase ATP-binding domain in the interval tyrosine 134–glycine 319. Residue aspartate 147–threonine 154 coordinates ATP. The DEAH box motif lies at aspartate 270–histidine 273. One can recognise a Helicase C-terminal domain in the interval valine 510–lysine 660. Disordered regions lie at residues lysine 715–threonine 735 and serine 749–threonine 768. A compositionally biased stretch (basic and acidic residues) spans glycine 755 to aspartate 764. The Atypical PIP-box signature appears at proline 772–serine 783. 3 disordered regions span residues lysine 791–proline 811, serine 833–aspartate 891, and glutamate 918–leucine 948. Positions glutamate 834–leucine 857 are enriched in basic and acidic residues. Residues serine 968 and serine 971 each carry the phosphoserine modification. Residues valine 1274 to aspartate 1306 are disordered. A compositionally biased stretch (basic and acidic residues) spans lysine 1276–leucine 1292. The segment covering asparagine 1295–aspartate 1306 has biased composition (polar residues).

The protein belongs to the SNF2/RAD54 helicase family. As to quaternary structure, interacts with NEK6. Interacts (via an atypical PIP-box) with PCNA; this interaction facilitates cenrtomeric localization of ERCC6L2. Interacts with CYREN; this interaction is DNA independent. Interacts with XRCC6 and XRCC5. Phosphorylated by NEK6.

It is found in the nucleus. It localises to the cytoplasm. Its subcellular location is the cytoskeleton. The protein localises to the microtubule organizing center. The protein resides in the centrosome. It is found in the mitochondrion. It localises to the chromosome. Its subcellular location is the centromere. In terms of biological role, promotes double-strand break (DSB) end-joining and facilitates programmed recombination by controlling how DNA ends are joined in a spatially oriented manner during repair. Also plays a role in DNA repair by restricting DNA end resection in double strand break (DSB) repair. Facilitates replication of complex DNA regions and regulates the maintenance of chromatin structure. In Mus musculus (Mouse), this protein is DNA excision repair protein ERCC-6-like 2.